A 540-amino-acid chain; its full sequence is uncharacterized protein (540 aa).

Residues 1–20 (MSVSYRGPRWSSFVHVSQHS) form the signal peptide.

It belongs to the TP096X family.

This is an uncharacterized protein from Treponema pallidum (strain Nichols).